Here is a 723-residue protein sequence, read N- to C-terminus: Transmembrane channel-like protein 7 (723 aa).

Disordered stretches follow at residues 1–28 (MSES…LSLD) and 51–71 (RRRT…KPTD). The Extracellular segment spans residues 1-168 (MSESSGSALQ…GIQSYFSFLR (168 aa)). N24 is a glycosylation site (N-linked (GlcNAc...) asparagine). N-linked (GlcNAc...) asparagine glycosylation is present at N84. S89 is modified (phosphoserine). The N-linked (GlcNAc...) asparagine glycan is linked to N96. A helical membrane pass occupies residues 169 to 189 (FLVLLNLVIFLIIFMLVLLPV). The Cytoplasmic segment spans residues 190–219 (LLTKYKITNSSFVLIPFKDMDKQCTVYPVS). Residues 220-240 (SSGLIYFYSYIIDLLSGTGFL) form a helical membrane-spanning segment. The Extracellular portion of the chain corresponds to 241–263 (EETSLFYGHYTIDGVKFQNFTYD). The N-linked (GlcNAc...) asparagine glycan is linked to N259. Residues 264 to 284 (LPLAYLLSTIASLALSLLWIV) form a helical membrane-spanning segment. Topologically, residues 285-362 (KRSVEGFKIN…EETIRIYSLR (78 aa)) are cytoplasmic. The chain crosses the membrane as a helical span at residues 363–383 (LFLNCIVLAVLGACFYAIYVA). The Extracellular portion of the chain corresponds to 384–404 (TVFSQEHMKKEIDKMVFGENL). A helical membrane pass occupies residues 405 to 425 (FILYLPSIVITLANFITPMIF). The Cytoplasmic portion of the chain corresponds to 426-494 (AKIIRYEDYS…PCWETQVGQE (69 aa)). Residues 495-515 (MYKLMIFDFIIILAVTLFVDF) traverse the membrane as a helical segment. Residues 516-555 (PRKLLVTYCSSCKLIQCWGQQEFAIPDNVLGIVYGQTICW) lie on the Extracellular side of the membrane. A helical transmembrane segment spans residues 556–576 (IGAFFSPLLPAIATLKFIIIF). The Cytoplasmic segment spans residues 577 to 601 (YVKEWSLLYTCRPSPRPFRASNSNF). The helical transmembrane segment at 602–622 (FFLLVLLIGLCLAIIPLTISI) threads the bilayer. At 623 to 665 (SRIPSSKACGPFTNFNTTWEVIPKTVSTFPSSLQSFIHGVTSE) the chain is on the extracellular side. The N-linked (GlcNAc...) asparagine glycan is linked to N638. Residues 666 to 686 (AFAVPFFMIICLIMFYFIALA) traverse the membrane as a helical segment. Over 687–723 (GAHKRVVIQLREQLSLESRDKCYLIQKLTEAQRDMRN) the chain is Cytoplasmic.

It belongs to the TMC family. Interacts with PIEZO2; the interaction inhibits PIEZO2-conducted mechanically activated currents.

The protein resides in the membrane. Functionally, acts as an inhibitory modulator of PIEZO2 mechanosensitive channel in dorsal root ganglion (DRG) neurons through physical interactions or interference with the interaction between PIEZO2 and the cytoskeleton. The chain is Transmembrane channel-like protein 7 from Homo sapiens (Human).